A 355-amino-acid polypeptide reads, in one-letter code: MKTIDLTPREREVLGIIIQAYVVSASPVSSRFIAKNYNLGLSDATIRNVMADLEDAGFISQPHTSAGRVPTDKGYRYYVDLIMMVQGIDDDEKRHIDSNLRLFTIDRKDSSEVLFAAAKVLGSISQQLSVVMSPRLSLGVFERLDMVLLSSSRIMVILSIQSLFVKTIVMELDLDVSRRQIEMVVDLLNQRLSGLTLDEIRTSIAERLADCDTDQGLLNRIVRSADELFDESPVLDRLYIAGAEYIVSQPEFDQPQKVRDLICMIEDKTRIARIVDLDGVVVPQVMTERDVSITIGRENPASTEGDFTVVTTPYFVGNTMGRLAVLGPKRMDYARVVRVVNYMADRLSTTFSDVN.

It belongs to the HrcA family.

Functionally, negative regulator of class I heat shock genes (grpE-dnaK-dnaJ and groELS operons). Prevents heat-shock induction of these operons. This is Heat-inducible transcription repressor HrcA from Prosthecochloris aestuarii (strain DSM 271 / SK 413).